A 529-amino-acid polypeptide reads, in one-letter code: [Pyruvate dehydrogenase [acetyl-transferring]]-phosphatase 2, mitochondrial (529 aa).

Residues 1-66 (MSSTVSYWIL…FTLCKAYRHT (66 aa)) constitute a mitochondrion transit peptide. Residues 106–517 (VLRFESNQLA…DDITVTVVYF (412 aa)) form the PPM-type phosphatase domain. Mn(2+) is bound by residues aspartate 141, glycine 142, aspartate 412, and aspartate 508.

The protein belongs to the PP2C family. It depends on Mg(2+) as a cofactor.

Its subcellular location is the mitochondrion. It carries out the reaction O-phospho-L-seryl-[pyruvate dehydrogenase E1 alpha subunit] + H2O = L-seryl-[pyruvate dehydrogenase E1 alpha subunit] + phosphate. Its function is as follows. Mitochondrial enzyme that catalyzes the dephosphorylation and concomitant reactivation of the alpha subunit of the E1 component of the pyruvate dehydrogenase complex (PDC), thereby stimulating the conversion of pyruvate into acetyl-CoA. Acts as a crucial regulator of T cell metabolism and function, with a particular focus on T-helper Th17. This is [Pyruvate dehydrogenase [acetyl-transferring]]-phosphatase 2, mitochondrial from Homo sapiens (Human).